An 85-amino-acid polypeptide reads, in one-letter code: UPF0213 protein NP_0776A (85 aa).

One can recognise a GIY-YIG domain in the interval Ala3 to Arg78. The segment covering Lys58–Ser70 has biased composition (basic and acidic residues). Residues Lys58–Gly85 are disordered.

The protein belongs to the UPF0213 family.

The protein is UPF0213 protein NP_0776A of Natronomonas pharaonis (strain ATCC 35678 / DSM 2160 / CIP 103997 / JCM 8858 / NBRC 14720 / NCIMB 2260 / Gabara) (Halobacterium pharaonis).